We begin with the raw amino-acid sequence, 253 residues long: Ferritin-2, chloroplastic (253 aa).

Residues 1–45 (MLHKASPALSLLSSGYTGGGNLFPPSRNSSNLLFSPSGSRFSVQA) constitute a chloroplast transit peptide. The extension peptide (EP) stretch occupies residues 46–82 (AKGTNTKSLTGVVFEPFEEVKKEMELVPTTPFVSLAR). One can recognise a Ferritin-like diiron domain in the interval 83 to 236 (HKFSDDSESA…EYVAQLRRIG (154 aa)). Residues Glu100, Glu135, His138, Glu184, and Gln218 each coordinate Fe cation.

The protein belongs to the ferritin family. As to quaternary structure, oligomer of 24 subunits. There are two types of subunits: L (light) chain and H (heavy) chain. The major chain can be light or heavy, depending on the species and tissue type. The functional molecule forms a roughly spherical shell with a diameter of 12 nm and contains a central cavity into which the insoluble mineral iron core is deposited.

It is found in the plastid. Its subcellular location is the chloroplast. The catalysed reaction is 4 Fe(2+) + O2 + 4 H(+) = 4 Fe(3+) + 2 H2O. Stores iron in a soluble, non-toxic, readily available form. Important for iron homeostasis. Has ferroxidase activity. Iron is taken up in the ferrous form and deposited as ferric hydroxides after oxidation. This chain is Ferritin-2, chloroplastic (FER2), found in Arabidopsis thaliana (Mouse-ear cress).